A 154-amino-acid chain; its full sequence is Lipoprotein signal peptidase (154 aa).

A run of 3 helical transmembrane segments spans residues 4–24, 62–82, and 84–104; these read IIIP…KLWI, LFTL…MKHI, and GSYW…GNFI. Active-site residues include aspartate 114 and aspartate 130. A helical membrane pass occupies residues 125-145; the sequence is IFNVADSYLTIGIICLMIALW.

This sequence belongs to the peptidase A8 family.

The protein localises to the cell membrane. It carries out the reaction Release of signal peptides from bacterial membrane prolipoproteins. Hydrolyzes -Xaa-Yaa-Zaa-|-(S,diacylglyceryl)Cys-, in which Xaa is hydrophobic (preferably Leu), and Yaa (Ala or Ser) and Zaa (Gly or Ala) have small, neutral side chains.. It participates in protein modification; lipoprotein biosynthesis (signal peptide cleavage). This protein specifically catalyzes the removal of signal peptides from prolipoproteins. This chain is Lipoprotein signal peptidase, found in Streptococcus agalactiae serotype V (strain ATCC BAA-611 / 2603 V/R).